Here is a 284-residue protein sequence, read N- to C-terminus: L-ribulose-5-phosphate 3-epimerase UlaE (284 aa).

It belongs to the L-ribulose-5-phosphate 3-epimerase family.

It catalyses the reaction L-ribulose 5-phosphate = L-xylulose 5-phosphate. The protein operates within cofactor degradation; L-ascorbate degradation; D-xylulose 5-phosphate from L-ascorbate: step 3/4. Catalyzes the isomerization of L-xylulose-5-phosphate to L-ribulose-5-phosphate. Is involved in the anaerobic L-ascorbate utilization. This Shigella sonnei (strain Ss046) protein is L-ribulose-5-phosphate 3-epimerase UlaE.